We begin with the raw amino-acid sequence, 118 residues long: Large ribosomal subunit protein bL19 (118 aa).

The protein belongs to the bacterial ribosomal protein bL19 family.

Functionally, this protein is located at the 30S-50S ribosomal subunit interface and may play a role in the structure and function of the aminoacyl-tRNA binding site. The protein is Large ribosomal subunit protein bL19 of Geobacter metallireducens (strain ATCC 53774 / DSM 7210 / GS-15).